The chain runs to 267 residues: Putative carbamate hydrolase RutD (267 aa).

The AB hydrolase-1 domain maps to 14 to 115 (PTLVLSAGLG…EKLVVVNGWP (102 aa)).

The protein belongs to the AB hydrolase superfamily. Hydrolase RutD family.

The catalysed reaction is carbamate + 2 H(+) = NH4(+) + CO2. In terms of biological role, involved in pyrimidine catabolism. May facilitate the hydrolysis of carbamate, a reaction that can also occur spontaneously. This is Putative carbamate hydrolase RutD from Serratia proteamaculans (strain 568).